An 83-amino-acid chain; its full sequence is Three-finger toxin W-IV (83 aa).

The signal sequence occupies residues 1-21 (MKTLLLTLVVVTIVCLDLGHT). 4 cysteine pairs are disulfide-bonded: Cys24–Cys45, Cys38–Cys62, Cys64–Cys75, and Cys76–Cys81.

It belongs to the three-finger toxin family. Short-chain subfamily. Type I alpha-neurotoxin sub-subfamily. Expressed by the venom gland.

Its subcellular location is the secreted. Binds to muscle nicotinic acetylcholine receptor (nAChR) and inhibit acetylcholine from binding to the receptor, thereby impairing neuromuscular transmission. This chain is Three-finger toxin W-IV, found in Walterinnesia aegyptia (Desert black snake).